The chain runs to 1103 residues: Voltage-dependent calcium channel subunit alpha-2/delta-1 (1103 aa).

The first 24 residues, 1–24, serve as a signal peptide directing secretion; the sequence is MAAGCLLALTLTLFQSGLIGPSSE. Residues 25 to 1073 are Extracellular-facing; it reads EPFPSPVTIK…VLEDYTDCGG (1049 aa). Asn92 is a glycosylation site (N-linked (GlcNAc...) asparagine). Phosphoserine is present on Ser119. Asn136 and Asn184 each carry an N-linked (GlcNAc...) asparagine glycan. Residues 253 to 430 enclose the VWFA domain; sequence DMLILVDVSG…INTQEYLDVL (178 aa). Residues Asp259, Ser261, and Ser263 each coordinate a divalent metal cation. Residues 259-263 carry the MIDAS-like motif motif; it reads DVSGS. Residues Asn324 and Asn348 are each glycosylated (N-linked (GlcNAc...) asparagine). A disulfide bridge links Cys404 with Cys1059. The 92-residue stretch at 446–537 folds into the Cache domain; the sequence is WTNVYLDALE…QPKPIGVGIP (92 aa). Residues Asn613, Asn781, and Asn888 are each glycosylated (N-linked (GlcNAc...) asparagine). The helical transmembrane segment at 1074 to 1094 threads the bilayer; it reads VSGLNPSLWSIFGLQFILLWL. The Cytoplasmic portion of the chain corresponds to 1095 to 1103; it reads VSGSRHYLL.

This sequence belongs to the calcium channel subunit alpha-2/delta family. As to quaternary structure, dimer formed of alpha-2-1 and delta-1 chains; disulfide-linked. Voltage-dependent calcium channels are multisubunit complexes, consisting of alpha-1 (CACNA1), alpha-2 (CACNA2D), beta (CACNB) and delta (CACNA2D) subunits in a 1:1:1:1 ratio. Proteolytically processed into subunits alpha-2-1 and delta-1 that are disulfide-linked. As to expression, isoform 2A is expressed in skeletal muscle and aorta. Isoform 2B is expressed in brain. Isoform 2C is expressed in heart. Isoform 2D is expressed in heart and smooth muscle. Isoform 2E is expressed in smooth muscle. All five isoforms are expressed in the cardiovascular system.

The protein resides in the membrane. The protein localises to the cell membrane. In terms of biological role, the alpha-2/delta subunit of voltage-dependent calcium channels regulates calcium current density and activation/inactivation kinetics of the calcium channel. Plays an important role in excitation-contraction coupling. The sequence is that of Voltage-dependent calcium channel subunit alpha-2/delta-1 (Cacna2d1) from Mus musculus (Mouse).